The chain runs to 1110 residues: Coiled-coil domain-containing protein 150 (1110 aa).

Coiled coils occupy residues 122–250 (LENL…TSAS), 288–313 (QDLL…SDLN), 413–695 (AAHA…KEDN), and 728–1048 (SEIA…EAHR).

This chain is Coiled-coil domain-containing protein 150 (Ccdc150), found in Mus musculus (Mouse).